Consider the following 152-residue polypeptide: FMN reductase (NADH) RutF (152 aa).

This sequence belongs to the non-flavoprotein flavin reductase family. RutF subfamily.

It carries out the reaction FMNH2 + NAD(+) = FMN + NADH + 2 H(+). In terms of biological role, catalyzes the reduction of FMN to FMNH2 which is used to reduce pyrimidine by RutA via the Rut pathway. This Shigella flexneri protein is FMN reductase (NADH) RutF.